The sequence spans 880 residues: Translation initiation factor IF-2 (880 aa).

Composition is skewed to basic and acidic residues over residues 34–43 (HMSSLDDKQV), 59–69 (TEKDSKNSSRK), 82–94 (RRRD…DNRH), 110–131 (NRRE…DLLN), 167–181 (KKVE…EKLE), 230–240 (QKEETKPTRKK), and 248–261 (EVPD…EHSD). Residues 34–297 (HMSSLDDKQV…KERPLPETLV (264 aa)) are disordered. A compositionally biased stretch (basic residues) spans 262–275 (KARRRRNKKNKRIN). Positions 276–292 (QSKEVKKQPTQRKERPL) are enriched in basic and acidic residues. In terms of domain architecture, tr-type G spans 381–550 (KRPPVVTIMG…LLQADVMELK (170 aa)). Positions 390-397 (GHVDHGKT) are G1. Position 390-397 (390-397 (GHVDHGKT)) interacts with GTP. Residues 415 to 419 (GITQR) form a G2 region. A G3 region spans residues 436–439 (DTPG). GTP-binding positions include 436–440 (DTPGH) and 490–493 (NKID). The G4 stretch occupies residues 490 to 493 (NKID). Positions 526–528 (SAK) are G5.

The protein belongs to the TRAFAC class translation factor GTPase superfamily. Classic translation factor GTPase family. IF-2 subfamily.

Its subcellular location is the cytoplasm. Its function is as follows. One of the essential components for the initiation of protein synthesis. Protects formylmethionyl-tRNA from spontaneous hydrolysis and promotes its binding to the 30S ribosomal subunits. Also involved in the hydrolysis of GTP during the formation of the 70S ribosomal complex. This chain is Translation initiation factor IF-2, found in Lactobacillus johnsonii (strain CNCM I-12250 / La1 / NCC 533).